The sequence spans 377 residues: Dihydroorotate dehydrogenase (quinone) (377 aa).

Residues 68–72 and Thr92 each bind FMN; that span reads AGFDK. Lys72 is a substrate binding site. Residue 117–121 coordinates substrate; sequence NRMGF. FMN contacts are provided by Asn149 and Asn182. Asn182 is a binding site for substrate. Ser185 acts as the Nucleophile in catalysis. Asn187 contacts substrate. The FMN site is built by Lys224 and Thr252. 253 to 254 contacts substrate; the sequence is NT. FMN-binding positions include Gly278, Gly307, and 328-329; that span reads YT.

The protein belongs to the dihydroorotate dehydrogenase family. Type 2 subfamily. As to quaternary structure, monomer. FMN is required as a cofactor.

It is found in the cell membrane. The enzyme catalyses (S)-dihydroorotate + a quinone = orotate + a quinol. It functions in the pathway pyrimidine metabolism; UMP biosynthesis via de novo pathway; orotate from (S)-dihydroorotate (quinone route): step 1/1. Functionally, catalyzes the conversion of dihydroorotate to orotate with quinone as electron acceptor. The sequence is that of Dihydroorotate dehydrogenase (quinone) from Thermobifida fusca (strain YX).